We begin with the raw amino-acid sequence, 233 residues long: Small ribosomal subunit protein uS2c (233 aa).

Belongs to the universal ribosomal protein uS2 family.

The protein resides in the plastid. It localises to the chloroplast. This is Small ribosomal subunit protein uS2c (rps2) from Staurastrum punctulatum (Green alga).